Here is a 75-residue protein sequence, read N- to C-terminus: Large ribosomal subunit protein bL31 (75 aa).

Belongs to the bacterial ribosomal protein bL31 family. Type A subfamily. As to quaternary structure, part of the 50S ribosomal subunit.

Functionally, binds the 23S rRNA. The polypeptide is Large ribosomal subunit protein bL31 (Zymomonas mobilis subsp. mobilis (strain ATCC 31821 / ZM4 / CP4)).